Consider the following 76-residue polypeptide: Acyl carrier protein (76 aa).

The Carrier domain occupies 1-76 (MSVEEKVKKI…DAIDYIAGKQ (76 aa)). The residue at position 36 (serine 36) is an O-(pantetheine 4'-phosphoryl)serine.

This sequence belongs to the acyl carrier protein (ACP) family. In terms of processing, 4'-phosphopantetheine is transferred from CoA to a specific serine of apo-ACP by AcpS. This modification is essential for activity because fatty acids are bound in thioester linkage to the sulfhydryl of the prosthetic group.

It localises to the cytoplasm. It functions in the pathway lipid metabolism; fatty acid biosynthesis. Functionally, carrier of the growing fatty acid chain in fatty acid biosynthesis. The protein is Acyl carrier protein of Oleidesulfovibrio alaskensis (strain ATCC BAA-1058 / DSM 17464 / G20) (Desulfovibrio alaskensis).